We begin with the raw amino-acid sequence, 364 residues long: MSYQIAVLAGDGIGPEVMAEARKVLKAVEARFGLNIEYTEYDVGGIAIDNHGCPLPEATLKGCEAADAILFGSVGGPKWEKLPPNEQPERGALLPLRGHFELFCNLRPAKLHDGLEHMSPLRSDISARGFDVLCVRELTGGIYFGKPKGRQGEGESEEAFDTMRYSRREISRIARIAFEAARGRRKKVTSVDKANVLACSVLWRQVVEEVAVDFPDVELEHIYIDNATMQLLRRPDEFDVMLCSNLFGDILSDEIAMLTGSMGLLSSASMNSTGFGLFEPAGGSAPDIAGKGIANPIAQILSAALMLRHSLKQEEAASAIERAVTKALNSGYLTGELLSSDQRHKAKTTVQMGDFIADAVKAGV.

76–89 (GPKWEKLPPNEQPE) serves as a coordination point for NAD(+). Arg-97, Arg-107, Arg-136, and Asp-225 together coordinate substrate. Mg(2+)-binding residues include Asp-225, Asp-249, and Asp-253. 283 to 295 (GSAPDIAGKGIAN) contributes to the NAD(+) binding site.

Belongs to the isocitrate and isopropylmalate dehydrogenases family. LeuB type 1 subfamily. Homodimer. Mg(2+) serves as cofactor. It depends on Mn(2+) as a cofactor.

The protein resides in the cytoplasm. It carries out the reaction (2R,3S)-3-isopropylmalate + NAD(+) = 4-methyl-2-oxopentanoate + CO2 + NADH. Its pathway is amino-acid biosynthesis; L-leucine biosynthesis; L-leucine from 3-methyl-2-oxobutanoate: step 3/4. In terms of biological role, catalyzes the oxidation of 3-carboxy-2-hydroxy-4-methylpentanoate (3-isopropylmalate) to 3-carboxy-4-methyl-2-oxopentanoate. The product decarboxylates to 4-methyl-2 oxopentanoate. This chain is 3-isopropylmalate dehydrogenase, found in Shewanella oneidensis (strain ATCC 700550 / JCM 31522 / CIP 106686 / LMG 19005 / NCIMB 14063 / MR-1).